Reading from the N-terminus, the 172-residue chain is uncharacterized protein (172 aa).

4 helical membrane passes run M46–P66, L76–F96, W104–S124, and F129–I149.

It localises to the endoplasmic reticulum membrane. This is an uncharacterized protein from Schizosaccharomyces pombe (strain 972 / ATCC 24843) (Fission yeast).